A 789-amino-acid polypeptide reads, in one-letter code: Protein translocase subunit SecA 2 (789 aa).

ATP contacts are provided by residues glutamine 79, 97 to 101 (GEGKT), and aspartate 487.

Belongs to the SecA family. As to quaternary structure, monomer and homodimer. Part of the essential Sec protein translocation apparatus which comprises SecA, SecYEG and auxiliary proteins SecDF. Other proteins may also be involved.

The protein localises to the cell membrane. Its subcellular location is the cytoplasm. It catalyses the reaction ATP + H2O + cellular proteinSide 1 = ADP + phosphate + cellular proteinSide 2.. Its function is as follows. Part of the Sec protein translocase complex. Interacts with the SecYEG preprotein conducting channel. Has a central role in coupling the hydrolysis of ATP to the transfer of proteins into and across the cell membrane, serving as an ATP-driven molecular motor driving the stepwise translocation of polypeptide chains across the membrane. This chain is Protein translocase subunit SecA 2, found in Pediococcus pentosaceus (strain ATCC 25745 / CCUG 21536 / LMG 10740 / 183-1w).